The sequence spans 380 residues: Lipid-A-disaccharide synthase (380 aa).

It belongs to the LpxB family.

The catalysed reaction is a lipid X + a UDP-2-N,3-O-bis[(3R)-3-hydroxyacyl]-alpha-D-glucosamine = a lipid A disaccharide + UDP + H(+). The protein operates within bacterial outer membrane biogenesis; LPS lipid A biosynthesis. Its function is as follows. Condensation of UDP-2,3-diacylglucosamine and 2,3-diacylglucosamine-1-phosphate to form lipid A disaccharide, a precursor of lipid A, a phosphorylated glycolipid that anchors the lipopolysaccharide to the outer membrane of the cell. In Francisella philomiragia subsp. philomiragia (strain ATCC 25017 / CCUG 19701 / FSC 153 / O#319-036), this protein is Lipid-A-disaccharide synthase.